We begin with the raw amino-acid sequence, 124 residues long: Small ribosomal subunit protein uS12 (124 aa).

Positions 1 to 28 (MPTISQLVGSERKRLTKKTKSPALKSCP) are disordered. A 3-methylthioaspartic acid modification is found at Asp-89. The segment at 104–124 (TAGVKDRRQSRSKYGAKAPKD) is disordered.

This sequence belongs to the universal ribosomal protein uS12 family. As to quaternary structure, part of the 30S ribosomal subunit. Contacts proteins S8 and S17. May interact with IF1 in the 30S initiation complex.

Functionally, with S4 and S5 plays an important role in translational accuracy. Interacts with and stabilizes bases of the 16S rRNA that are involved in tRNA selection in the A site and with the mRNA backbone. Located at the interface of the 30S and 50S subunits, it traverses the body of the 30S subunit contacting proteins on the other side and probably holding the rRNA structure together. The combined cluster of proteins S8, S12 and S17 appears to hold together the shoulder and platform of the 30S subunit. In Prochlorococcus marinus (strain MIT 9301), this protein is Small ribosomal subunit protein uS12.